The chain runs to 735 residues: MSKMRVYEYAKKHNVPSKDVIHKLKEMNIEVNNHMTMLEADVVEKLDHQYRVNSEKKAEKKTEKPKRPTPAKAADFADEEMFEDKKETAKAKPAKKKGAVKGKETKKTEAQQQEKKLFQAAKKKGKGPMKGKKQAAPASKQAQQPAKKEKELPKKITFEGSLTVAELAKKLGREPSEIIKKLFMLGVMATINQDLDKDAIELICSDYGVEVEEKVTIDETNFETIEIVDAPEDLVERPPVVTIMGHVDHGKTTLLDAIRHSKVTEQEAGGITQHIGAYQVTVNGKKITFLDTPGHEAFTTMRARGAQVTDIVILVVAADDGVMPQTVEAINHAKAANVPIIVAINKMDKPEANPDRVMQELMEYNLVPEEWGGDTIFCKLSAKTQDGIDHLLEMILLVSEMEELKANPNRRALGTVIEAKLDKGRGPVATLLVQAGTLKVGDPIVVGTTYGRVRAMVNDSGRRVKEAGPSMPVEITGLHDVPQAGDRFMVFEDEKKARQIGEARAQRQLQEQRSVKTRVSLDDLFEQIKQGEMKELNLIVKADVQGSVEALVAALQKIDIEGVRVKIIHAAVGAITESDILLATTSNAIVIGFNVRPDTNAKRAAESENVDIRLHRIIYNVIEEIEAAMKGMLDPEYEEKVIGQAEVRQTFKVSKVGTIAGCYVTDGKITRDSKVRLIRQGIVVYEGEIDSLKRYKDDVREVAQGYECGVTIKNFNDIKEGDVIEAYIMQEVARA.

2 stretches are compositionally biased toward basic and acidic residues: residues 52-66 (VNSE…EKPK) and 101-117 (KGKE…EKKL). The segment at 52–154 (VNSEKKAEKK…PAKKEKELPK (103 aa)) is disordered. Basic residues predominate over residues 121–133 (AKKKGKGPMKGKK). Positions 134-145 (QAAPASKQAQQP) are enriched in low complexity. In terms of domain architecture, tr-type G spans 236 to 405 (ERPPVVTIMG…LLVSEMEELK (170 aa)). The segment at 245–252 (GHVDHGKT) is G1. GTP is bound at residue 245–252 (GHVDHGKT). Residues 270–274 (GITQH) are G2. A G3 region spans residues 291-294 (DTPG). GTP contacts are provided by residues 291–295 (DTPGH) and 345–348 (NKMD). The interval 345–348 (NKMD) is G4. Residues 381–383 (SAK) are G5.

Belongs to the TRAFAC class translation factor GTPase superfamily. Classic translation factor GTPase family. IF-2 subfamily.

The protein resides in the cytoplasm. In terms of biological role, one of the essential components for the initiation of protein synthesis. Protects formylmethionyl-tRNA from spontaneous hydrolysis and promotes its binding to the 30S ribosomal subunits. Also involved in the hydrolysis of GTP during the formation of the 70S ribosomal complex. The polypeptide is Translation initiation factor IF-2 (Geobacillus thermodenitrificans (strain NG80-2)).